The following is a 289-amino-acid chain: 4-diphosphocytidyl-2-C-methyl-D-erythritol kinase (289 aa).

Lys-16 is an active-site residue. ATP is bound at residue 99-109; sequence PMGGGIGGGSS. Residue Asp-141 is part of the active site.

This sequence belongs to the GHMP kinase family. IspE subfamily.

The catalysed reaction is 4-CDP-2-C-methyl-D-erythritol + ATP = 4-CDP-2-C-methyl-D-erythritol 2-phosphate + ADP + H(+). It participates in isoprenoid biosynthesis; isopentenyl diphosphate biosynthesis via DXP pathway; isopentenyl diphosphate from 1-deoxy-D-xylulose 5-phosphate: step 3/6. Functionally, catalyzes the phosphorylation of the position 2 hydroxy group of 4-diphosphocytidyl-2C-methyl-D-erythritol. This is 4-diphosphocytidyl-2-C-methyl-D-erythritol kinase from Ralstonia nicotianae (strain ATCC BAA-1114 / GMI1000) (Ralstonia solanacearum).